Consider the following 131-residue polypeptide: Antileukoproteinase (131 aa).

The signal sequence occupies residues Met-1 to Gly-25. WAP domains follow at residues Asp-29–Val-77 and Val-83–Met-131. Cystine bridges form between Cys-36–Cys-65, Cys-44–Cys-69, Cys-52–Cys-64, Cys-58–Cys-73, Cys-90–Cys-119, Cys-97–Cys-123, Cys-106–Cys-118, and Cys-112–Cys-127. The interval Arg-85–Met-131 is elastase inhibitory domain.

As to quaternary structure, interacts with GRN; interaction protects progranulin from proteolysis. Detected in bronchial epithelial cells. Detected in bronchoalveolar fluid after infection with M.tuberculosis (at protein level). Highest expression in lung, spleen, intestine and epididymis with lower levels in liver and seminal vesicle. No expression in brain, heart, kidney and muscle.

Its subcellular location is the secreted. Its function is as follows. Acid-stable proteinase inhibitor with strong affinities for trypsin, chymotrypsin, elastase, and cathepsin G. Modulates the innate immune response after bacterial infection. Contributes to regulate the inflammatory and immune responses to the intracellular parasite L.major. Down-regulates responses to bacterial lipopolysaccharide (LPS). Plays a role in regulating the activation of NF-kappa-B and inflammatory responses. Has antimicrobial activity against mycobacteria, but not against salmonella. Contributes to normal resistance against infection by M.tuberculosis. Required for normal resistance to L.major. Required for normal wound healing, probably by preventing tissue damage by limiting protease activity. Together with ELANE, required for normal differentiation and proliferation of bone marrow myeloid cells. This chain is Antileukoproteinase (Slpi), found in Mus musculus (Mouse).